The chain runs to 155 residues: MIDKSGYRANVAIVLLNRQDRVFWGQRKSRTSWQFPQGGVATGETPLQAMYRELYEEVGLRPHDVEVIASTRDWFKYDIPDSLVRSREPVCIGQKQKWFLLRLKTSESNINLEANDSPEFDNWRWVSYWYPINHVVYFKQDVYRRALTYFKEYIN.

Positions G6–T148 constitute a Nudix hydrolase domain. Positions G38–G59 match the Nudix box motif.

Belongs to the Nudix hydrolase family. RppH subfamily. It depends on a divalent metal cation as a cofactor.

Accelerates the degradation of transcripts by removing pyrophosphate from the 5'-end of triphosphorylated RNA, leading to a more labile monophosphorylated state that can stimulate subsequent ribonuclease cleavage. The chain is RNA pyrophosphohydrolase from Francisella philomiragia subsp. philomiragia (strain ATCC 25017 / CCUG 19701 / FSC 153 / O#319-036).